Consider the following 337-residue polypeptide: Serpentine receptor class delta-50 (337 aa).

7 consecutive transmembrane segments (helical) span residues 10–30, 48–68, 107–127, 147–167, 202–222, 250–270, and 280–300; these read VLIL…SQLL, IYLF…FVLQ, VLFH…IIAF, QLVI…LSPN, SSQT…ALVF, GLTL…TYYI, and LFVE…DPLL.

The protein belongs to the nematode receptor-like protein srd family.

It is found in the membrane. The polypeptide is Serpentine receptor class delta-50 (Caenorhabditis elegans).